We begin with the raw amino-acid sequence, 207 residues long: MLNKLTSLLKDAGISLTDHQKNQLIAYVNMLHKWNKAYNLTSVRDPNEMLVRHILDSIVVAPYLQGERFIDVGTGPGLPGIPLSIVRPEAHFTLLDSLGKRVRFLRQVQHELKLENIEPVQSRVEEFPSEPPFDGVISRAFASLNDMVSWCHHLPGEQGRFYALKGQMPEDEIALLPEEYQVESVVKLQVPALDGERHLVVIKANKI.

Residues Gly-73, Leu-78, 124 to 125 (VE), and Arg-139 contribute to the S-adenosyl-L-methionine site.

It belongs to the methyltransferase superfamily. RNA methyltransferase RsmG family.

The protein resides in the cytoplasm. It carries out the reaction guanosine(527) in 16S rRNA + S-adenosyl-L-methionine = N(7)-methylguanosine(527) in 16S rRNA + S-adenosyl-L-homocysteine. Specifically methylates the N7 position of guanine in position 527 of 16S rRNA. The sequence is that of Ribosomal RNA small subunit methyltransferase G from Escherichia coli O17:K52:H18 (strain UMN026 / ExPEC).